The chain runs to 299 residues: Nucleotide-binding protein AFE_3021 (299 aa).

11–18 provides a ligand contact to ATP; sequence GLSGSGKS. 62 to 65 provides a ligand contact to GTP; that stretch reads DVRN.

The protein belongs to the RapZ-like family.

Displays ATPase and GTPase activities. The sequence is that of Nucleotide-binding protein AFE_3021 from Acidithiobacillus ferrooxidans (strain ATCC 23270 / DSM 14882 / CIP 104768 / NCIMB 8455) (Ferrobacillus ferrooxidans (strain ATCC 23270)).